A 417-amino-acid chain; its full sequence is Carboxypeptidase A2 (417 aa).

The N-terminal stretch at 1-16 (MRLTLLLAALLGYIYC) is a signal peptide. Residues 17–112 (QETFVGDQVL…EMLFNQQRER (96 aa)) constitute a propeptide, activation peptide. The Peptidase M14 domain maps to 120–412 (AYHTLEEIYQ…LGLKTIMEHV (293 aa)). Zn(2+)-binding residues include histidine 177 and glutamate 180. Substrate contacts are provided by residues 177-180 (HARE), arginine 235, and 252-253 (NR). Cysteine 246 and cysteine 269 are oxidised to a cystine. Histidine 304 is a Zn(2+) binding site. 305 to 306 (SY) is a substrate binding site. A disulfide bond links cysteine 318 and cysteine 352. Residue tyrosine 356 participates in substrate binding. Residue glutamate 378 is the Proton donor/acceptor of the active site.

The protein belongs to the peptidase M14 family. Requires Zn(2+) as cofactor.

Its subcellular location is the secreted. It carries out the reaction Similar to that of carboxypeptidase A (EC 3.4.17.1), but with a preference for bulkier C-terminal residues.. In terms of biological role, carboxypeptidase that catalyzes the release of a C-terminal amino acid, with a preference for large aromatic C-terminal residues. This is Carboxypeptidase A2 (Cpa2) from Rattus norvegicus (Rat).